Consider the following 550-residue polypeptide: Glucose-6-phosphate isomerase (550 aa).

Residues 163–164, 214–219, glutamine 358, glutamate 362, histidine 393, and lysine 515 contribute to the D-glucose 6-phosphate site; these read GS and SKTFTT. Glutamate 362 (proton donor) is an active-site residue. Active-site residues include histidine 393 and lysine 515.

It belongs to the GPI family. As to quaternary structure, homodimer.

It localises to the cytoplasm. It catalyses the reaction alpha-D-glucose 6-phosphate = beta-D-fructose 6-phosphate. The protein operates within carbohydrate degradation; glycolysis; D-glyceraldehyde 3-phosphate and glycerone phosphate from D-glucose: step 2/4. Functionally, in the cytoplasm, catalyzes the conversion of glucose-6-phosphate to fructose-6-phosphate, the second step in glycolysis, and the reverse reaction during gluconeogenesis. In Candida albicans (strain SC5314 / ATCC MYA-2876) (Yeast), this protein is Glucose-6-phosphate isomerase (PGI1).